The primary structure comprises 261 residues: Flagellar L-ring protein (261 aa).

The signal sequence occupies residues 1–15; sequence MKRLLCLLLLTTLTG. Cys-16 carries the N-palmitoyl cysteine lipid modification. The S-diacylglycerol cysteine moiety is linked to residue Cys-16. Basic and acidic residues predominate over residues 121–133; sequence KSADAELSKKNDS. Positions 121–140 are disordered; that stretch reads KSADAELSKKNDSSMDPLQV.

This sequence belongs to the FlgH family. The basal body constitutes a major portion of the flagellar organelle and consists of four rings (L,P,S, and M) mounted on a central rod.

It is found in the cell outer membrane. Its subcellular location is the bacterial flagellum basal body. Its function is as follows. Assembles around the rod to form the L-ring and probably protects the motor/basal body from shearing forces during rotation. This is Flagellar L-ring protein from Aliivibrio salmonicida (strain LFI1238) (Vibrio salmonicida (strain LFI1238)).